A 754-amino-acid polypeptide reads, in one-letter code: C2H2 finger domain transcription factor crzA (754 aa).

Disordered stretches follow at residues 1-51 (MASQ…TVTG), 63-150 (SFAN…FSDL), 187-227 (VHQQ…QGST), 269-299 (QGHR…FDGV), and 384-543 (GAEG…RVQK). Positions 30–44 (HQQQQQQQHQQHQGQ) are enriched in low complexity. 2 stretches are compositionally biased toward polar residues: residues 63–80 (SFAN…SPSA) and 94–114 (TPAS…QSYG). The segment covering 130–140 (QQQSQQQHHQQ) has biased composition (low complexity). A compositionally biased stretch (polar residues) spans 141-150 (PSLDDNFSDL). The segment covering 189 to 209 (QQSHPTQIPSSHSSTSPQISP) has biased composition (low complexity). Polar residues-rich tracts occupy residues 210 to 227 (LEQQ…QGST) and 279 to 293 (SEIS…LSQH). Low complexity-rich tracts occupy residues 459-472 (STSR…SSSL) and 491-515 (RQQQ…STSS). 2 C2H2-type zinc fingers span residues 548 to 570 (FQCN…LRTH) and 576 to 598 (FVCT…EGLH). The C2H2-type 3; degenerate zinc-finger motif lies at 604–635 (FVCQGELSRGGQWGCGRRFARADALGRHFRSE). The disordered stretch occupies residues 708–737 (ADDPSDIGGRSSFDASSGNEFGFEDDDSGL).

Its subcellular location is the nucleus. It localises to the cytoplasm. Its function is as follows. Transcription factor involved in the regulation of calcium ion homeostasis. Regulates genes encoding calcium transporters, transcription factors and genes that could be directly or indirectly involved in calcium metabolism. Supports especially pmcA, pmcB and pmcC expression encoding for calcium-translocating P-type ATPases. Binds target promoters at motif A[GT][CG]CA[AC][AG]. Plays an essential role germination, radial growth, and asexual development. Also plays a major role in proper chitin and glucan incorporation into the cell wall. Involved in the high-osmolarity glycerol response (HOG) signaling pathway. Required for pathogenicity in an experimental murine model of invasive pulmonary aspergillosis. The protein is C2H2 finger domain transcription factor crzA of Aspergillus fumigatus (strain ATCC MYA-4609 / CBS 101355 / FGSC A1100 / Af293) (Neosartorya fumigata).